Reading from the N-terminus, the 316-residue chain is UDP-N-acetylenolpyruvoylglucosamine reductase (316 aa).

An FAD-binding PCMH-type domain is found at 27-225 (VGGKAERFYR…KTAINALLKK (199 aa)). Arginine 190 is a catalytic residue. Serine 239 functions as the Proton donor in the catalytic mechanism. Glutamate 309 is an active-site residue.

The protein belongs to the MurB family. The cofactor is FAD.

It localises to the cytoplasm. The enzyme catalyses UDP-N-acetyl-alpha-D-muramate + NADP(+) = UDP-N-acetyl-3-O-(1-carboxyvinyl)-alpha-D-glucosamine + NADPH + H(+). The protein operates within cell wall biogenesis; peptidoglycan biosynthesis. In terms of biological role, cell wall formation. This chain is UDP-N-acetylenolpyruvoylglucosamine reductase, found in Coxiella burnetii (strain RSA 331 / Henzerling II).